The following is a 688-amino-acid chain: Elongation factor G (688 aa).

The 275-residue stretch at 8–282 (DKFRNFGIMA…GVVDYLPSPL (275 aa)) folds into the tr-type G domain. GTP contacts are provided by residues 17–24 (AHIDAGKT), 81–85 (DTPGH), and 135–138 (NKMD).

This sequence belongs to the TRAFAC class translation factor GTPase superfamily. Classic translation factor GTPase family. EF-G/EF-2 subfamily.

Its subcellular location is the cytoplasm. Functionally, catalyzes the GTP-dependent ribosomal translocation step during translation elongation. During this step, the ribosome changes from the pre-translocational (PRE) to the post-translocational (POST) state as the newly formed A-site-bound peptidyl-tRNA and P-site-bound deacylated tRNA move to the P and E sites, respectively. Catalyzes the coordinated movement of the two tRNA molecules, the mRNA and conformational changes in the ribosome. The polypeptide is Elongation factor G (Clostridium botulinum (strain Eklund 17B / Type B)).